A 121-amino-acid chain; its full sequence is Basic phospholipase A2 VRV-PL-V (121 aa).

7 disulfides stabilise this stretch: Cys-26-Cys-115, Cys-28-Cys-44, Cys-43-Cys-95, Cys-49-Cys-121, Cys-50-Cys-88, Cys-57-Cys-81, and Cys-75-Cys-86. Ca(2+)-binding residues include Tyr-27, Gly-29, and Gly-31. Residue His-47 is part of the active site. Asp-48 contacts Ca(2+). Residue Asp-89 is part of the active site.

It belongs to the phospholipase A2 family. Group II subfamily. D49 sub-subfamily. Monomer. Ca(2+) serves as cofactor. As to expression, expressed by the venom gland.

It is found in the secreted. It catalyses the reaction a 1,2-diacyl-sn-glycero-3-phosphocholine + H2O = a 1-acyl-sn-glycero-3-phosphocholine + a fatty acid + H(+). Snake venom phospholipase A2 (PLA2) that has a low enzymatic activity. PLA2 catalyzes the calcium-dependent hydrolysis of the 2-acyl groups in 3-sn-phosphoglycerides. The chain is Basic phospholipase A2 VRV-PL-V from Daboia russelii (Russel's viper).